The primary structure comprises 227 residues: ATP phosphoribosyltransferase (227 aa).

Belongs to the ATP phosphoribosyltransferase family. Short subfamily. Heteromultimer composed of HisG and HisZ subunits.

The protein localises to the cytoplasm. It catalyses the reaction 1-(5-phospho-beta-D-ribosyl)-ATP + diphosphate = 5-phospho-alpha-D-ribose 1-diphosphate + ATP. It participates in amino-acid biosynthesis; L-histidine biosynthesis; L-histidine from 5-phospho-alpha-D-ribose 1-diphosphate: step 1/9. Its function is as follows. Catalyzes the condensation of ATP and 5-phosphoribose 1-diphosphate to form N'-(5'-phosphoribosyl)-ATP (PR-ATP). Has a crucial role in the pathway because the rate of histidine biosynthesis seems to be controlled primarily by regulation of HisG enzymatic activity. This is ATP phosphoribosyltransferase from Rhodospirillum rubrum (strain ATCC 11170 / ATH 1.1.1 / DSM 467 / LMG 4362 / NCIMB 8255 / S1).